Consider the following 227-residue polypeptide: Prolactin (227 aa).

A signal peptide spans 1–28 (MNIKGSPWKGSLLLLLVSNLLLCQSVAP). An intrachain disulfide couples Cys-32 to Cys-39. Ser-54 bears the Phosphoserine mark. Residue Asn-59 is glycosylated (N-linked (GlcNAc...) asparagine; partial). 4 positions are modified to phosphoserine: Ser-62, Ser-118, Ser-163, and Ser-194. Disulfide bonds link Cys-86–Cys-202 and Cys-219–Cys-227.

The protein belongs to the somatotropin/prolactin family. In terms of assembly, interacts with PRLR.

Its subcellular location is the secreted. In terms of biological role, prolactin acts primarily on the mammary gland by promoting lactation. The sequence is that of Prolactin (PRL) from Homo sapiens (Human).